The sequence spans 110 residues: UPF0235 protein Mpop_2087 (110 aa).

The protein belongs to the UPF0235 family.

The sequence is that of UPF0235 protein Mpop_2087 from Methylorubrum populi (strain ATCC BAA-705 / NCIMB 13946 / BJ001) (Methylobacterium populi).